Here is a 538-residue protein sequence, read N- to C-terminus: Cytochrome P450 52-M1 (538 aa).

The chain crosses the membrane as a helical span at residues G18 to W38. C484 is a binding site for heme.

The protein belongs to the cytochrome P450 family. The cofactor is heme.

It is found in the membrane. It carries out the reaction an omega-methyl-long-chain fatty acid + reduced [NADPH--hemoprotein reductase] + O2 = an omega-hydroxy-long-chain fatty acid + oxidized [NADPH--hemoprotein reductase] + H2O + H(+). The catalysed reaction is an (omega-1)-ethyl fatty acid + reduced [NADPH--hemoprotein reductase] + O2 = an (omega-1)-hydroxy-long-chain fatty acid + oxidized [NADPH--hemoprotein reductase] + H2O + H(+). It catalyses the reaction (9Z)-octadecenoate + reduced [NADPH--hemoprotein reductase] + O2 = 18-hydroxy-(9Z)-octadecenoate + oxidized [NADPH--hemoprotein reductase] + H2O + H(+). The enzyme catalyses (9Z)-octadecenoate + reduced [NADPH--hemoprotein reductase] + O2 = 17-hydroxy-(9Z)-octadecenoate + oxidized [NADPH--hemoprotein reductase] + H2O + H(+). It carries out the reaction (9Z,12Z)-octadecadienoate + reduced [NADPH--hemoprotein reductase] + O2 = 18-hydroxy-(9Z,12Z)-octadecadienoate + oxidized [NADPH--hemoprotein reductase] + H2O + H(+). The catalysed reaction is (9Z,12Z)-octadecadienoate + reduced [NADPH--hemoprotein reductase] + O2 = 17-hydroxy-(9Z,12Z)-octadecadienoate + oxidized [NADPH--hemoprotein reductase] + H2O + H(+). It catalyses the reaction hexadecanoate + reduced [NADPH--hemoprotein reductase] + O2 = 16-hydroxyhexadecanoate + oxidized [NADPH--hemoprotein reductase] + H2O + H(+). The enzyme catalyses (9Z)-hexadecenoate + reduced [NADPH--hemoprotein reductase] + O2 = (9Z)-16-hydroxyhexadec-9-enoate + oxidized [NADPH--hemoprotein reductase] + H2O + H(+). It carries out the reaction octadecanoate + reduced [NADPH--hemoprotein reductase] + O2 = 18-hydroxyoctadecanoate + oxidized [NADPH--hemoprotein reductase] + H2O + H(+). In terms of biological role, catalyzes the first step of sophorolipid biosynthesis. Catalyzes the terminal (at the omega-position) or subterminal (at the omega(-1)-position) hydroxylation of a fatty acid. This converts the fatty acid to a substrate for the subsequent glycosyltransferase reactions. Oleic acid is the preferred substrate, but it acts on various other C-16, C-18 and C-20 saturated and unsaturated fatty acids, namely palmitic, palmitoleic, stearic, linoleic, cis-9,10-epoxystearic, trans-9,10-epoxystearic and arachidonic acid. The chain is Cytochrome P450 52-M1 from Starmerella bombicola (Yeast).